The sequence spans 390 residues: LL-diaminopimelate aminotransferase 2 (390 aa).

Residues Y13 and G38 each coordinate substrate. Residues Y67, 102–103 (SK), Y127, N177, Y208, and 236–238 (SLS) contribute to the pyridoxal 5'-phosphate site. Positions 103, 127, and 177 each coordinate substrate. An N6-(pyridoxal phosphate)lysine modification is found at K239. R247 is a pyridoxal 5'-phosphate binding site. R365 is a binding site for substrate.

It belongs to the class-I pyridoxal-phosphate-dependent aminotransferase family. LL-diaminopimelate aminotransferase subfamily. As to quaternary structure, homodimer. The cofactor is pyridoxal 5'-phosphate.

It carries out the reaction (2S,6S)-2,6-diaminopimelate + 2-oxoglutarate = (S)-2,3,4,5-tetrahydrodipicolinate + L-glutamate + H2O + H(+). Its pathway is amino-acid biosynthesis; L-lysine biosynthesis via DAP pathway; LL-2,6-diaminopimelate from (S)-tetrahydrodipicolinate (aminotransferase route): step 1/1. In terms of biological role, involved in the synthesis of meso-diaminopimelate (m-DAP or DL-DAP), required for both lysine and peptidoglycan biosynthesis. Catalyzes the direct conversion of tetrahydrodipicolinate to LL-diaminopimelate. This Nostoc sp. (strain PCC 7120 / SAG 25.82 / UTEX 2576) protein is LL-diaminopimelate aminotransferase 2.